Here is a 103-residue protein sequence, read N- to C-terminus: Large ribosomal subunit protein uL24 (103 aa).

The protein belongs to the universal ribosomal protein uL24 family. Part of the 50S ribosomal subunit.

Functionally, one of two assembly initiator proteins, it binds directly to the 5'-end of the 23S rRNA, where it nucleates assembly of the 50S subunit. Its function is as follows. One of the proteins that surrounds the polypeptide exit tunnel on the outside of the subunit. This Actinobacillus pleuropneumoniae serotype 5b (strain L20) protein is Large ribosomal subunit protein uL24.